We begin with the raw amino-acid sequence, 342 residues long: N-acetyl-gamma-glutamyl-phosphate reductase (342 aa).

Cys147 is a catalytic residue.

Belongs to the NAGSA dehydrogenase family. Type 1 subfamily.

It localises to the cytoplasm. It carries out the reaction N-acetyl-L-glutamate 5-semialdehyde + phosphate + NADP(+) = N-acetyl-L-glutamyl 5-phosphate + NADPH + H(+). It functions in the pathway amino-acid biosynthesis; L-arginine biosynthesis; N(2)-acetyl-L-ornithine from L-glutamate: step 3/4. Functionally, catalyzes the NADPH-dependent reduction of N-acetyl-5-glutamyl phosphate to yield N-acetyl-L-glutamate 5-semialdehyde. This is N-acetyl-gamma-glutamyl-phosphate reductase from Campylobacter jejuni subsp. doylei (strain ATCC BAA-1458 / RM4099 / 269.97).